An 880-amino-acid chain; its full sequence is Protein transport protein SEC23 A (880 aa).

Residues 1–13 are compositionally biased toward polar residues; sequence MANLPKSSVNYPG. The segment at 1 to 95 is disordered; it reads MANLPKSSVN…PPGPPVFNTP (95 aa). The segment covering 20–36 has biased composition (pro residues); sequence PNRPSPQPDRTPVPHSP. Residues 57–70 show a composition bias toward low complexity; sequence MSSPSMKSPSLLSP. Residues Cys204, Cys207, Cys226, and Cys229 each coordinate Zn(2+). The segment at 204-229 is zinc finger-like; it reads CLNCGAYSNPYSSILIGSGQWQCVIC.

Belongs to the SEC23/SEC24 family. SEC24 subfamily. As to quaternary structure, component of the coat protein complex II (COPII), composed of at least five proteins: the Sec23/24 complex, the Sec13/31 complex and Sar1. In terms of tissue distribution, mostly expressed in seedlings, roots, cotyledons, leaves, trichomes, leaf primordia and flowers, and, to a lower extent, in mature siliques.

The protein resides in the cytoplasmic vesicle. It localises to the COPII-coated vesicle membrane. Its subcellular location is the endoplasmic reticulum membrane. It is found in the membrane. Component of the coat protein complex II (COPII) which promotes the formation of transport vesicles from the endoplasmic reticulum (ER). The coat has two main functions, the physical deformation of the endoplasmic reticulum membrane into vesicles and the selection of cargo molecules. May contribute to COPII-coated vesicles formation and ER-Golgi vesicle transport. Together with SEC23D, essential for pollen wall development and exine patterning, probably by regulating endoplasmic reticulum (ER) export of lipids and proteins (e.g. sporopollenin) necessary for pollen wall formation. Also involved in plastid physiology in anther tapetal cells. This is Protein transport protein SEC23 A from Arabidopsis thaliana (Mouse-ear cress).